The chain runs to 204 residues: Holliday junction branch migration complex subunit RuvA (204 aa).

The interval 1 to 64 (MIARLRGTLL…EDGQTLFGFR (64 aa)) is domain I. Positions 65–143 (TRAERDLFRR…GVGGGSTAAP (79 aa)) are domain II. The tract at residues 144–153 (AAGADHPTGE) is flexible linker. The tract at residues 153-204 (ENDPVSEAIEGLVALGYKPPEAARMARNAAEPELGCEAIIRRALQRAVPRGG) is domain III.

This sequence belongs to the RuvA family. In terms of assembly, homotetramer. Forms an RuvA(8)-RuvB(12)-Holliday junction (HJ) complex. HJ DNA is sandwiched between 2 RuvA tetramers; dsDNA enters through RuvA and exits via RuvB. An RuvB hexamer assembles on each DNA strand where it exits the tetramer. Each RuvB hexamer is contacted by two RuvA subunits (via domain III) on 2 adjacent RuvB subunits; this complex drives branch migration. In the full resolvosome a probable DNA-RuvA(4)-RuvB(12)-RuvC(2) complex forms which resolves the HJ.

It localises to the cytoplasm. Its function is as follows. The RuvA-RuvB-RuvC complex processes Holliday junction (HJ) DNA during genetic recombination and DNA repair, while the RuvA-RuvB complex plays an important role in the rescue of blocked DNA replication forks via replication fork reversal (RFR). RuvA specifically binds to HJ cruciform DNA, conferring on it an open structure. The RuvB hexamer acts as an ATP-dependent pump, pulling dsDNA into and through the RuvAB complex. HJ branch migration allows RuvC to scan DNA until it finds its consensus sequence, where it cleaves and resolves the cruciform DNA. This chain is Holliday junction branch migration complex subunit RuvA, found in Halorhodospira halophila (strain DSM 244 / SL1) (Ectothiorhodospira halophila (strain DSM 244 / SL1)).